The primary structure comprises 224 residues: Phosphoribosylformylglycinamidine synthase subunit PurQ (224 aa).

Residues 2–224 (KIAVIVFPGS…SLLEEGKVKG (223 aa)) form the Glutamine amidotransferase type-1 domain. C86 acts as the Nucleophile in catalysis. Active-site residues include H195 and E197.

As to quaternary structure, part of the FGAM synthase complex composed of 1 PurL, 1 PurQ and 2 PurS subunits.

The protein resides in the cytoplasm. The enzyme catalyses N(2)-formyl-N(1)-(5-phospho-beta-D-ribosyl)glycinamide + L-glutamine + ATP + H2O = 2-formamido-N(1)-(5-O-phospho-beta-D-ribosyl)acetamidine + L-glutamate + ADP + phosphate + H(+). It catalyses the reaction L-glutamine + H2O = L-glutamate + NH4(+). Its pathway is purine metabolism; IMP biosynthesis via de novo pathway; 5-amino-1-(5-phospho-D-ribosyl)imidazole from N(2)-formyl-N(1)-(5-phospho-D-ribosyl)glycinamide: step 1/2. Its function is as follows. Part of the phosphoribosylformylglycinamidine synthase complex involved in the purines biosynthetic pathway. Catalyzes the ATP-dependent conversion of formylglycinamide ribonucleotide (FGAR) and glutamine to yield formylglycinamidine ribonucleotide (FGAM) and glutamate. The FGAM synthase complex is composed of three subunits. PurQ produces an ammonia molecule by converting glutamine to glutamate. PurL transfers the ammonia molecule to FGAR to form FGAM in an ATP-dependent manner. PurS interacts with PurQ and PurL and is thought to assist in the transfer of the ammonia molecule from PurQ to PurL. This is Phosphoribosylformylglycinamidine synthase subunit PurQ from Ligilactobacillus salivarius (strain UCC118) (Lactobacillus salivarius).